Reading from the N-terminus, the 134-residue chain is Secretin (134 aa).

An N-terminal signal peptide occupies residues 1-21 (MATRALLLLLLLPPLLLLAGC). Positions 22–31 (AARPAPPRAP) are excised as a propeptide. V59 bears the Valine amide mark. S63 is modified (phosphoserine). Positions 63 to 134 (SQQDPENNTA…PAAEGSPMPP (72 aa)) are excised as a propeptide.

It belongs to the glucagon family.

The protein localises to the secreted. Its function is as follows. Hormone involved in different processes, such as regulation of the pH of the duodenal content, food intake and water homeostasis. Exerts its biological effects by binding to secretin receptor (SCTR), a G-protein coupled receptor expressed in the basolateral domain of several cells. Acts as a key gastrointestinal hormone by regulating the pH of the duodenal content. Secreted by S cells of the duodenum in the crypts of Lieberkuehn and regulates the pH of the duodenum by (1) inhibiting the secretion of gastric acid from the parietal cells of the stomach and (2) stimulating the production of bicarbonate (NaHCO(3)) from the ductal cells of the pancreas. Production of bicarbonate is essential to neutralize the pH and ensure no damage is done to the small intestine by the gastric acid. In addition to regulating the pH of the duodenal content, plays a central role in diet induced thermogenesis: acts as a non-sympathetic brown fat (BAT) activator mediating prandial thermogenesis, which consequentially induces satiation. Mechanistically, secretin released by the gut after a meal binds to secretin receptor (SCTR) in brown adipocytes, activating brown fat thermogenesis by stimulating lipolysis, which is sensed in the brain and promotes satiation. Also able to stimulate lipolysis in white adipocytes. Also plays an important role in cellular osmoregulation: released into the systemic circulation in response to hyperosmolality and acts at different levels in the hypothalamus, pituitary and kidney to regulate water homeostasis. Also plays a role in the central nervous system, possibly by acting as a neuropeptide hormone: required for hippocampal synaptic function and neural progenitor cells maintenance. This Sus scrofa (Pig) protein is Secretin.